The following is a 295-amino-acid chain: Lipoyl synthase (295 aa).

Residues cysteine 34, cysteine 39, cysteine 45, cysteine 60, cysteine 64, cysteine 67, and serine 273 each coordinate [4Fe-4S] cluster. In terms of domain architecture, Radical SAM core spans 46-262 (WNKRHATIMV…KRMAYAKGFS (217 aa)).

The protein belongs to the radical SAM superfamily. Lipoyl synthase family. [4Fe-4S] cluster is required as a cofactor.

The protein localises to the cytoplasm. It carries out the reaction [[Fe-S] cluster scaffold protein carrying a second [4Fe-4S](2+) cluster] + N(6)-octanoyl-L-lysyl-[protein] + 2 oxidized [2Fe-2S]-[ferredoxin] + 2 S-adenosyl-L-methionine + 4 H(+) = [[Fe-S] cluster scaffold protein] + N(6)-[(R)-dihydrolipoyl]-L-lysyl-[protein] + 4 Fe(3+) + 2 hydrogen sulfide + 2 5'-deoxyadenosine + 2 L-methionine + 2 reduced [2Fe-2S]-[ferredoxin]. The protein operates within protein modification; protein lipoylation via endogenous pathway; protein N(6)-(lipoyl)lysine from octanoyl-[acyl-carrier-protein]: step 2/2. Functionally, catalyzes the radical-mediated insertion of two sulfur atoms into the C-6 and C-8 positions of the octanoyl moiety bound to the lipoyl domains of lipoate-dependent enzymes, thereby converting the octanoylated domains into lipoylated derivatives. The sequence is that of Lipoyl synthase from Anaplasma phagocytophilum (strain HZ).